A 174-amino-acid polypeptide reads, in one-letter code: MIPAGLANPFAALFGGGTPIDFGKNFKDNRRILGDGKTYRGLIFGSLCGTLIGLLQILLAPHIAPYLAGFIDPSLLVGYSYIALITMPFGALLGDIVKSFFKRRLGFERGAMLPIADQLDFVAGAWVLTFLLDPEWLLANFTIWVAIAVILIIPVFHVAFNIAGYKLGKKDVPW.

Helical transmembrane passes span 51-71, 74-94, 112-132, and 136-156; these read LIGL…AGFI, SLLV…ALLG, MLPI…TFLL, and WLLA…IPVF.

Belongs to the CDP-archaeol synthase family. It depends on Mg(2+) as a cofactor.

It localises to the cell membrane. It carries out the reaction 2,3-bis-O-(geranylgeranyl)-sn-glycerol 1-phosphate + CTP + H(+) = CDP-2,3-bis-O-(geranylgeranyl)-sn-glycerol + diphosphate. It functions in the pathway membrane lipid metabolism; glycerophospholipid metabolism. Functionally, catalyzes the formation of CDP-2,3-bis-(O-geranylgeranyl)-sn-glycerol (CDP-archaeol) from 2,3-bis-(O-geranylgeranyl)-sn-glycerol 1-phosphate (DGGGP) and CTP. This reaction is the third ether-bond-formation step in the biosynthesis of archaeal membrane lipids. This is CDP-archaeol synthase from Methanocella arvoryzae (strain DSM 22066 / NBRC 105507 / MRE50).